Reading from the N-terminus, the 153-residue chain is Neuromedin-S (153 aa).

Positions 1–26 are cleaved as a signal peptide; sequence MKHPLPHYSPILFIYCFCMLQIPSSG. Propeptides lie at residues 27–69, 70–105, and 106–108; these read ASPP…VYKR, FLFH…ASRR, and MKR. Asparagine 144 is subject to Asparagine amide. Residues 147–153 constitute a propeptide that is removed on maturation; that stretch reads YTDNNFQ.

This sequence belongs to the NmU family.

The protein localises to the secreted. Its function is as follows. Implicated in the regulation of circadian rhythms through autocrine and/or paracrine actions. The protein is Neuromedin-S (Nms) of Mus musculus (Mouse).